A 261-amino-acid chain; its full sequence is Bidirectional sugar transporter SWEET1b (261 aa).

Topologically, residues methionine 1 to lysine 6 are extracellular. The helical transmembrane segment at phenylalanine 7–threonine 27 threads the bilayer. The 89-residue stretch at phenylalanine 7 to histidine 95 folds into the MtN3/slv 1 domain. Residues phenylalanine 28–glycine 42 are Cytoplasmic-facing. A helical membrane pass occupies residues valine 43–valine 63. Residues serine 64–serine 71 lie on the Extracellular side of the membrane. A helical transmembrane segment spans residues threonine 72 to alanine 92. The Cytoplasmic segment spans residues serine 93 to threonine 101. Residues leucine 102 to alanine 122 form a helical membrane-spanning segment. At leucine 123–lysine 129 the chain is on the extracellular side. The helical transmembrane segment at leucine 130 to isoleucine 150 threads the bilayer. Residues glycine 133–lysine 215 enclose the MtN3/slv 2 domain. Residues methionine 151–proline 164 lie on the Cytoplasmic side of the membrane. The helical transmembrane segment at phenylalanine 165–glycine 185 threads the bilayer. Residues arginine 186–phenylalanine 189 lie on the Extracellular side of the membrane. A helical transmembrane segment spans residues valine 190–isoleucine 210. The Cytoplasmic segment spans residues tyrosine 211–valine 261. The segment at glycine 218–valine 261 is disordered.

It belongs to the SWEET sugar transporter family. Forms homodimers. In terms of tissue distribution, highly expressed in leaves. Expressed at very low levels in roots, stems and panicles.

It localises to the cell membrane. It catalyses the reaction D-glucose(out) = D-glucose(in). The enzyme catalyses D-galactose(in) = D-galactose(out). Mediates transport of sugars across the plasma membrane. Can transport glucose and galactose, but not fructose, mannose and sucrose. This Oryza sativa subsp. japonica (Rice) protein is Bidirectional sugar transporter SWEET1b (SWEET1B).